Reading from the N-terminus, the 624-residue chain is PTS system mannitol-specific EIICBA component (624 aa).

The PTS EIIC type-2 domain maps to 13-336; that stretch reads FGRFLSNMVM…SFVIASFFLK (324 aa). Transmembrane regions (helical) follow at residues 25-46, 51-71, 135-156, 166-186, 274-293, and 314-335; these read IGAFIAWGFITALFIPTGWLPN, KLVGPMITYLLPLLIGYSGGK, SSGIIGMILAILFFWLIGPAVK, VDILVKAHLLPLTSIFVEPAK, VIAGGVSGVFTLVLFNAGLV, and VGVLASVAIAATVSFVIASFFL. Residues 372–463 enclose the PTS EIIB type-2 domain; the sequence is QKIFVACDAG…LVQDLSNTKV (92 aa). The active-site Phosphocysteine intermediate; for EIIB activity is Cys378. Position 378 is a phosphocysteine; by EIIA (Cys378). Residues 482-624 enclose the PTS EIIA type-2 domain; the sequence is FVLTEKQVFL…VEKVLALLKA (143 aa). His542 serves as the catalytic Tele-phosphohistidine intermediate; for EIIA activity. His542 bears the Phosphohistidine; by HPr mark.

As to quaternary structure, homodimer. In terms of processing, an intramolecular phosphotransfer takes places between His-542 and Cys-378.

Its subcellular location is the cell inner membrane. It catalyses the reaction D-mannitol(out) + N(pros)-phospho-L-histidyl-[protein] = D-mannitol 1-phosphate(in) + L-histidyl-[protein]. In terms of biological role, the phosphoenolpyruvate-dependent sugar phosphotransferase system (sugar PTS), a major carbohydrate active transport system, catalyzes the phosphorylation of incoming sugar substrates concomitantly with their translocation across the cell membrane. This system is involved in D-mannitol transport. This chain is PTS system mannitol-specific EIICBA component (mtlA), found in Pasteurella multocida (strain Pm70).